Consider the following 317-residue polypeptide: Small ribosomal subunit protein uS2 (317 aa).

Disordered regions lie at residues 1–30 and 293–317; these read MENE…ASKE and RSFE…EVAE. Basic and acidic residues predominate over residues 18 to 30; it reads MAEKADDSKASKE. The segment covering 308–317 has biased composition (low complexity); the sequence is KTTTSTEVAE.

The protein belongs to the universal ribosomal protein uS2 family.

In Mycoplasmopsis agalactiae (strain NCTC 10123 / CIP 59.7 / PG2) (Mycoplasma agalactiae), this protein is Small ribosomal subunit protein uS2.